Here is a 317-residue protein sequence, read N- to C-terminus: Tegument protein UL14 homolog (317 aa).

The tract at residues 166–291 (IAADPHSPRS…QKWLGGIPPL (126 aa)) is disordered. Over residues 182 to 195 (KAPEDARCGARKPG) the composition is skewed to basic and acidic residues. Positions 198-211 (NNYTPSAQPRSQET) are enriched in polar residues. Composition is skewed to basic and acidic residues over residues 217–236 (ASPD…EHHS) and 249–265 (SERR…KSSE).

Belongs to the alphaherpesvirinae HHV-1 UL14 protein family.

It is found in the virion tegument. Its subcellular location is the host cytoplasm. The protein localises to the host nucleus. Functionally, contributes to the nuclear transport of the viral transcriptional activator VP16 during the early phase of infection. Therefore, participates indirectly in the regulation of the immediate-early gene expression. Additionally, seems to be important for efficient nuclear targeting of capsids. This is Tegument protein UL14 homolog from Equus caballus (Horse).